The primary structure comprises 96 residues: Protein Vpr (96 aa).

Residues 1–42 form a homooligomerization region; sequence MEQAPEDQGPQREPYNEWTLELLEELKREAVRHFPRPWLHGL. A phosphoserine; by host mark is found at Ser-79, Ser-94, and Ser-96.

It belongs to the HIV-1 VPR protein family. Homooligomer, may form homodimer. Interacts with p6-gag region of the Pr55 Gag precursor protein through a (Leu-X-X)4 motif near the C-terminus of the P6gag protein. Interacts with host UNG. May interact with host RAD23A/HHR23A. Interacts with host VPRBP/DCAF1, leading to hijack the CUL4A-RBX1-DDB1-DCAF1/VPRBP complex, mediating ubiquitination of host proteins such as TERT and ZGPAT and arrest of the cell cycle in G2 phase. Phosphorylated on several residues by host. These phosphorylations regulate VPR activity for the nuclear import of the HIV-1 pre-integration complex.

The protein resides in the virion. It is found in the host nucleus. It localises to the host extracellular space. During virus replication, may deplete host UNG protein, and incude G2-M cell cycle arrest. Acts by targeting specific host proteins for degradation by the 26S proteasome, through association with the cellular CUL4A-DDB1 E3 ligase complex by direct interaction with host VPRPB/DCAF-1. Cell cycle arrest reportedly occurs within hours of infection and is not blocked by antiviral agents, suggesting that it is initiated by the VPR carried into the virion. Additionally, VPR induces apoptosis in a cell cycle dependent manner suggesting that these two effects are mechanistically linked. Detected in the serum and cerebrospinal fluid of AIDS patient, VPR may also induce cell death to bystander cells. In terms of biological role, during virus entry, plays a role in the transport of the viral pre-integration (PIC) complex to the host nucleus. This function is crucial for viral infection of non-dividing macrophages. May act directly at the nuclear pore complex, by binding nucleoporins phenylalanine-glycine (FG)-repeat regions. In Human immunodeficiency virus type 1 group M subtype C (isolate 92BR025) (HIV-1), this protein is Protein Vpr.